The sequence spans 296 residues: N-acetylmuramic acid 6-phosphate etherase (296 aa).

One can recognise an SIS domain in the interval 54–217 (VTESFRKGGR…STTSMVGIGK (164 aa)). Residue E82 is the Proton donor of the active site. E113 is a catalytic residue.

It belongs to the GCKR-like family. MurNAc-6-P etherase subfamily. Homodimer.

It carries out the reaction N-acetyl-D-muramate 6-phosphate + H2O = N-acetyl-D-glucosamine 6-phosphate + (R)-lactate. The protein operates within amino-sugar metabolism; N-acetylmuramate degradation. Specifically catalyzes the cleavage of the D-lactyl ether substituent of MurNAc 6-phosphate, producing GlcNAc 6-phosphate and D-lactate. In Listeria welshimeri serovar 6b (strain ATCC 35897 / DSM 20650 / CCUG 15529 / CIP 8149 / NCTC 11857 / SLCC 5334 / V8), this protein is N-acetylmuramic acid 6-phosphate etherase.